Reading from the N-terminus, the 299-residue chain is Small ribosomal subunit protein uS2 (299 aa).

The segment covering 259-291 (AAASAAGPTSWEADGADWAASSAPAAAGESWAE) has biased composition (low complexity). The disordered stretch occupies residues 259 to 299 (AAASAAGPTSWEADGADWAASSAPAAAGESWAETQPAEGKW).

It belongs to the universal ribosomal protein uS2 family. As to quaternary structure, component of the small ribosomal subunit. Mature ribosomes consist of a small (40S) and a large (60S) subunit. The 40S subunit contains about 33 different proteins and 1 molecule of RNA (18S). The 60S subunit contains about 49 different proteins and 3 molecules of RNA (25S, 5.8S and 5S). Interacts with rps21.

It localises to the cytoplasm. Required for the assembly and/or stability of the 40S ribosomal subunit. Required for the processing of the 20S rRNA-precursor to mature 18S rRNA in a late step of the maturation of 40S ribosomal subunits. The protein is Small ribosomal subunit protein uS2 (rps0) of Aspergillus flavus (strain ATCC 200026 / FGSC A1120 / IAM 13836 / NRRL 3357 / JCM 12722 / SRRC 167).